We begin with the raw amino-acid sequence, 149 residues long: NPC intracellular cholesterol transporter 2 (149 aa).

A signal peptide spans 1–19 (MRFLAATILLLALVAASQA). 3 disulfide bridges follow: Cys27-Cys140, Cys42-Cys47, and Cys93-Cys99. N-linked (GlcNAc...) asparagine glycosylation is found at Asn58 and Asn69. The residue at position 116 (Lys116) is an N6-acetyllysine.

It belongs to the NPC2 family. As to quaternary structure, interacts with NPC1 (via the second lumenal domain) in a cholestrol-dependent manner. Interacts with NUS1/NgBR, the interaction stabilizes NCP2 and regulates cholesterol trafficking. Interacts with DHDDS. Interacts with NEDD4L (via C2 domain). Interacts with NPC1L1. Post-translationally, N-glycosylated. Detected in liver and bile. Detected in epididymis (at protein level). Detected in caput epididymis, corpus epididymis, cauda epididymis and ovary.

The protein localises to the secreted. The protein resides in the endoplasmic reticulum. It localises to the lysosome. The enzyme catalyses cholesterol(in) = cholesterol(out). Functionally, intracellular cholesterol transporter which acts in concert with NPC1 and plays an important role in the egress of cholesterol from the lysosomal compartment. Unesterified cholesterol that has been released from LDLs in the lumen of the late endosomes/lysosomes is transferred by NPC2 to the cholesterol-binding pocket in the N-terminal domain of NPC1. May bind and mobilize cholesterol that is associated with membranes. NPC2 binds cholesterol with a 1:1 stoichiometry. Can bind a variety of sterols, including lathosterol, desmosterol and the plant sterols stigmasterol and beta-sitosterol. The secreted form of NCP2 regulates biliary cholesterol secretion via stimulation of ABCG5/ABCG8-mediated cholesterol transport. The protein is NPC intracellular cholesterol transporter 2 of Mus musculus (Mouse).